Consider the following 348-residue polypeptide: L-threonine 3-dehydrogenase (348 aa).

Cysteine 42 serves as a coordination point for Zn(2+). Catalysis depends on charge relay system residues threonine 44 and histidine 47. Zn(2+) contacts are provided by histidine 67, glutamate 68, cysteine 97, cysteine 100, cysteine 103, and cysteine 111. Residues leucine 179, glutamate 199, arginine 204, 266-268 (LGL), and 291-292 (IT) contribute to the NAD(+) site.

The protein belongs to the zinc-containing alcohol dehydrogenase family. In terms of assembly, homotetramer. It depends on Zn(2+) as a cofactor.

It is found in the cytoplasm. It carries out the reaction L-threonine + NAD(+) = (2S)-2-amino-3-oxobutanoate + NADH + H(+). The protein operates within amino-acid degradation; L-threonine degradation via oxydo-reductase pathway; glycine from L-threonine: step 1/2. Functionally, catalyzes the NAD(+)-dependent oxidation of L-threonine to 2-amino-3-ketobutyrate. The chain is L-threonine 3-dehydrogenase from Pyrococcus abyssi (strain GE5 / Orsay).